The chain runs to 673 residues: NADH-quinone oxidoreductase chain 3 (673 aa).

Positions 5–90 constitute a 2Fe-2S ferredoxin-type domain; the sequence is RKIKIDDTII…PSEIRTNSPM (86 aa). The [2Fe-2S] cluster site is built by Cys37, Cys48, Cys51, and Cys66. Residues 90–129 form the 4Fe-4S His(Cys)3-ligated-type domain; sequence MVKKAREGVMEFLLINHPLDCPICDQGGECDLQDQAMAYG. [4Fe-4S] cluster-binding residues include His106, Cys110, Cys113, Cys119, Cys158, Cys161, Cys164, and Cys208. The 4Fe-4S Mo/W bis-MGD-type domain maps to 227-283; that stretch reads LTKTESIDVMDALGSSIRIDTKGREVMRILPRNHDGVNEEWISDKTRFVWDGLRRQR.

This sequence belongs to the complex I 75 kDa subunit family. As to quaternary structure, NDH-1 is composed of at least 14 different subunits, Nqo1 to Nqo14. The complex has a L-shaped structure, with the hydrophobic arm (subunits Nqo7, Nqo8, Nqo10 to Nqo14) embedded in the inner membrane and the hydrophilic peripheral arm (subunits Nqo1 to Nqo6, Nqo9) protruding into the bacterial cytoplasm. The hydrophilic domain contains all the redox centers. [2Fe-2S] cluster serves as cofactor. It depends on [4Fe-4S] cluster as a cofactor.

The protein localises to the cell inner membrane. The catalysed reaction is a quinone + NADH + 5 H(+)(in) = a quinol + NAD(+) + 4 H(+)(out). In terms of biological role, NDH-1 shuttles electrons from NADH, via FMN and iron-sulfur (Fe-S) centers, to quinones in the respiratory chain. The immediate electron acceptor for the enzyme in this species is believed to be ubiquinone. Couples the redox reaction to proton translocation (for every two electrons transferred, four hydrogen ions are translocated across the cytoplasmic membrane), and thus conserves the redox energy in a proton gradient. This chain is NADH-quinone oxidoreductase chain 3, found in Paracoccus denitrificans.